The following is a 727-amino-acid chain: AN1-type zinc finger protein 4 (727 aa).

Positions 28–103 constitute a Ubiquitin-like domain; that stretch reads MELFIETLTG…LKLVLAMRGG (76 aa). 2 disordered regions span residues 187-217 and 238-264; these read HRMSGGSMYNSDTDEDEETEPSSSGQQIIEN and KKPKKAVKIKPHPPVAPRPSSGSTAPS. Basic residues predominate over residues 238-248; it reads KKPKKAVKIKP. The AN1-type zinc finger occupies 661–708; the sequence is KKTTNHCFLCGKKTGLASSYECRCGNNFCASHRYAETHGCTYDYKSAG. Residues Cys667, Cys670, Cys682, Cys684, Cys689, His692, His698, and Cys700 each coordinate Zn(2+).

The protein is AN1-type zinc finger protein 4 (ZFAND4) of Homo sapiens (Human).